Consider the following 825-residue polypeptide: NT-3 growth factor receptor (825 aa).

Positions 1–31 (MDVSLCPAKCSFWRIFLLGSVWLDYVGSVLA) are cleaved as a signal peptide. 2 disulfides stabilise this stretch: Cys32/Cys38 and Cys36/Cys45. The Extracellular segment spans residues 32–429 (CPANCVCSKT…TVTHKPEEDT (398 aa)). Residues Asn68, Asn72, and Asn79 are each glycosylated (N-linked (GlcNAc...) asparagine). 2 LRR repeats span residues 104–125 (GLQK…AFAK) and 128–149 (HLRY…LFQT). N-linked (GlcNAc...) asparagine glycosylation is found at Asn133 and Asn163. Residues 160–209 (NFFNCSCDIRWMQLWQEQGEAKLNSQSLYCISADGSQLPLFRMNISQCDL) enclose the LRRCT domain. 2 disulfides stabilise this stretch: Cys164–Cys189 and Cys166–Cys207. Asn203, Asn218, Asn232, Asn259, Asn267, Asn272, and Asn294 each carry an N-linked (GlcNAc...) asparagine glycan. 2 consecutive Ig-like C2-type domains span residues 210-300 (PEIS…VALT) and 309-382 (SLEE…NRQE). The cysteines at positions 231 and 284 are disulfide-linked. Cys320 and Cys362 are oxidised to a cystine. 2 N-linked (GlcNAc...) asparagine glycosylation sites follow: Asn375 and Asn388. The helical transmembrane segment at 430–453 (FGVSIAVGLAAFACVLLVVLFIMI) threads the bilayer. Topologically, residues 454-825 (NKYGRRSKFG…ATPIYLDILG (372 aa)) are cytoplasmic. Phosphotyrosine; by autocatalysis is present on Tyr516. One can recognise a Protein kinase domain in the interval 538–814 (IVLKRELGEG…EIYKILHALG (277 aa)). ATP contacts are provided by residues 544–552 (LGEGAFGKV) and Lys572. The active-site Proton acceptor is Asp679. 4 positions are modified to phosphotyrosine; by autocatalysis: Tyr705, Tyr709, Tyr710, and Tyr820.

The protein belongs to the protein kinase superfamily. Tyr protein kinase family. Insulin receptor subfamily. Exists in a dynamic equilibrium between monomeric (low affinity) and dimeric (high affinity) structures. Binds SH2B2. Interacts with SQSTM1 and KIDINS220. Interacts with PTPRS. Interacts with MAPK8IP3/JIP3. Post-translationally, ligand-mediated auto-phosphorylation. Preferentially in the brain, low levels in the ovaries.

The protein resides in the membrane. It catalyses the reaction L-tyrosyl-[protein] + ATP = O-phospho-L-tyrosyl-[protein] + ADP + H(+). Receptor tyrosine kinase involved in nervous system and probably heart development. Upon binding of its ligand NTF3/neurotrophin-3, NTRK3 autophosphorylates and activates different signaling pathways, including the phosphatidylinositol 3-kinase/AKT and the MAPK pathways, that control cell survival and differentiation. In Sus scrofa (Pig), this protein is NT-3 growth factor receptor (NTRK3).